The primary structure comprises 323 residues: Tyrosine recombinase XerD (323 aa).

Residues 21–106 enclose the Core-binding (CB) domain; the sequence is AEDDQAIQRF…TLRGFYALCL (86 aa). One can recognise a Tyr recombinase domain in the interval 127–317; it reads SLPKALTESQ…ARQHLQTLHA (191 aa). Active-site residues include Arg167, Lys191, His269, Arg272, and His295. The O-(3'-phospho-DNA)-tyrosine intermediate role is filled by Tyr304.

Belongs to the 'phage' integrase family. XerD subfamily. Forms a cyclic heterotetrameric complex composed of two molecules of XerC and two molecules of XerD.

Its subcellular location is the cytoplasm. Site-specific tyrosine recombinase, which acts by catalyzing the cutting and rejoining of the recombining DNA molecules. The XerC-XerD complex is essential to convert dimers of the bacterial chromosome into monomers to permit their segregation at cell division. It also contributes to the segregational stability of plasmids. The chain is Tyrosine recombinase XerD from Xanthomonas campestris pv. campestris (strain ATCC 33913 / DSM 3586 / NCPPB 528 / LMG 568 / P 25).